The primary structure comprises 417 residues: Pygopus homolog 1 (417 aa).

Basic and acidic residues predominate over residues 1 to 11 (MSAEQDKEPIA). Disordered stretches follow at residues 1–71 (MSAE…AANP), 175–265 (HFRQ…MEDP), and 284–318 (ENSR…CTPD). Over residues 18–27 (GDSGLDGLGG) the composition is skewed to gly residues. The Nuclear localization signal signature appears at 35–41 (PDKKKRK). Composition is skewed to polar residues over residues 180-221 (SAEN…TNHS), 240-256 (DFTQ…SSTH), and 284-305 (ENSR…QNKP). The PHD-type zinc finger occupies 338–396 (VYPCGICTNEVNDDQDAILCEASCQKWFHRICTGMTETAYGLLTAEASAVWGCDTCMAD). Positions 339–386 (YPCGICTNEVNDDQDAILCEASCQKWFHRICTGMTETAYGLLTAEASA) are interaction with H3K4me2. Residues 371–389 (GMTETAYGLLTAEASAVWG) form an interaction with BCL9 region.

Interacts with BCL9 via The PHD-type zinc finger motiv, and thereby becomes part of the nuclear beta-catenin/TCF complex. Found in a complex with BCL9L, CDC73, CTNNB1 and PYGO1. Interacts with histone H3 mono-, di- or tri-methylated at 'Lys4' (H3K4me1, H3K4me2, H3K4me3); the interaction is enhanced by the interaction with BCL9.

It is found in the nucleus. Involved in signal transduction through the Wnt pathway. The polypeptide is Pygopus homolog 1 (Pygo1) (Mus musculus (Mouse)).